The sequence spans 178 residues: Caveolin-1 (178 aa).

At S2 the chain carries N-acetylserine. At S2 the chain carries Phosphoserine. The tract at residues 2–94 (SGGKYVDSEG…WKASFTTFTV (93 aa)) is required for homooligomerization. Over 2–104 (SGGKYVDSEG…TKYWFYRLLS (103 aa)) the chain is Cytoplasmic. Position 5 is an N6-acetyllysine; alternate (K5). K5 participates in a covalent cross-link: Glycyl lysine isopeptide (Lys-Gly) (interchain with G-Cter in ubiquitin); alternate. A Phosphotyrosine modification is found at Y6. S9 carries the phosphoserine modification. Residue Y14 is modified to Phosphotyrosine; by ABL1. Y25 carries the post-translational modification Phosphotyrosine. Residues K26, K30, K39, K47, and K57 each participate in a glycyl lysine isopeptide (Lys-Gly) (interchain with G-Cter in ubiquitin) cross-link. The interval 82–94 (DGIWKASFTTFTV) is interaction with CAVIN3. Positions 105-125 (TIFGIPMALIWGIYFAILSFL) form an intramembrane region, helical. Over 126–178 (HIWAVVPCIKSFLIEIQCISRVYSIYVHTFCDPLFEAIGKIFSNVRISMQKEI) the chain is Cytoplasmic. Residues 131-142 (VPCIKSFLIEIQ) form an interacts with SPRY1, SPRY2, SPRY3 and SPRY4 region. Residues C133, C143, and C156 are each lipidated (S-palmitoyl cysteine). Residues 149–160 (SIYVHTFCDPLF) are interacts with SPRY1, SPRY2, and SPRY4. The interval 167–178 (FSNVRISMQKEI) is interacts with SPRY1, SPRY2, SPRY3 and SPRY4.

This sequence belongs to the caveolin family. In terms of assembly, homooligomer. Interacts with GLIPR2. Interacts with NOSTRIN. Interacts with SNAP25 and STX1A. Interacts (via the N-terminus) with DPP4; the interaction is direct. Interacts with CTNNB1, CDH1 and JUP. Interacts with PACSIN2; this interaction induces membrane tubulation. Interacts with SLC7A9. Interacts with BMX and BTK. Interacts with TGFBR1. Interacts with CAVIN3 (via leucine-zipper domain) in a cholesterol-sensitive manner. Interacts with CAVIN1. Interacts with EHD2 in a cholesterol-dependent manner. Forms a ternary complex with UBXN6 and VCP; mediates CAV1 targeting to lysosomes for degradation. Interacts with ABCG1; this interaction regulates ABCG1-mediated cholesterol efflux. Interacts with NEU3; this interaction enhances NEU3 sialidase activity within caveola. Interacts (via C-terminus) with SPRY1, SPRY2 (via C-terminus), SPRY3, and SPRY4. Interacts with IGFBP5; this interaction allows trafficking of IGFBP5 from the plasma membrane to the nucleus. Phosphorylated at Tyr-14 by ABL1 in response to oxidative stress. Post-translationally, ubiquitinated. Undergo monoubiquitination and multi- and/or polyubiquitination. Monoubiquitination of N-terminal lysines promotes integration in a ternary complex with UBXN6 and VCP which promotes oligomeric CAV1 targeting to lysosomes for degradation. Ubiquitinated by ZNRF1; leading to degradation and modulation of the TLR4-mediated immune response.

It is found in the golgi apparatus membrane. The protein resides in the cell membrane. It localises to the membrane. The protein localises to the caveola. Its subcellular location is the membrane raft. May act as a scaffolding protein within caveolar membranes. Forms a stable heterooligomeric complex with CAV2 that targets to lipid rafts and drives caveolae formation. Mediates the recruitment of CAVIN proteins (CAVIN1/2/3/4) to the caveolae. Interacts directly with G-protein alpha subunits and can functionally regulate their activity. Involved in the costimulatory signal essential for T-cell receptor (TCR)-mediated T-cell activation. Its binding to DPP4 induces T-cell proliferation and NF-kappa-B activation in a T-cell receptor/CD3-dependent manner. Recruits CTNNB1 to caveolar membranes and may regulate CTNNB1-mediated signaling through the Wnt pathway. Negatively regulates TGFB1-mediated activation of SMAD2/3 by mediating the internalization of TGFBR1 from membrane rafts leading to its subsequent degradation. Binds 20(S)-hydroxycholesterol (20(S)-OHC). This chain is Caveolin-1 (CAV1), found in Oryctolagus cuniculus (Rabbit).